The chain runs to 25 residues: Caerin-1.4 (25 aa).

Position 25 is a leucine amide (leucine 25).

Belongs to the frog skin active peptide (FSAP) family. Caerin subfamily. As to expression, expressed by the skin parotoid and/or rostral glands.

The protein localises to the secreted. In terms of biological role, antibacterial peptide, that adopts an alpha helical conformation which can disrupt bacterial membranes. Each caerin displays a different antimicrobial specificity. The protein is Caerin-1.4 of Ranoidea caerulea (Green tree frog).